We begin with the raw amino-acid sequence, 229 residues long: Wtf element wtf14 (229 aa).

The span at 1–26 (MENNHHLAKDSLDELNPKRGKGEHET) shows a compositional bias: basic and acidic residues. Residues 1 to 27 (MENNHHLAKDSLDELNPKRGKGEHETQ) form a disordered region. 4 helical membrane passes run 71 to 91 (IPAV…YLVF), 100 to 120 (VLFG…LLAT), 151 to 171 (LYAI…LMFF), and 188 to 208 (VIGV…PGLF).

This sequence belongs to the WTF family.

It is found in the endoplasmic reticulum membrane. May act in meiotic drive. This chain is Wtf element wtf14, found in Schizosaccharomyces kambucha (Fission yeast).